Reading from the N-terminus, the 403-residue chain is Phosphoglycerate kinase (403 aa).

Substrate contacts are provided by residues Asp-21–Asn-23, Arg-36, His-59–Arg-62, Arg-119, and Arg-159. Residues Lys-214, Gly-301, Glu-332, and Gly-359 to Ser-362 contribute to the ATP site.

The protein belongs to the phosphoglycerate kinase family. In terms of assembly, monomer.

The protein resides in the cytoplasm. The enzyme catalyses (2R)-3-phosphoglycerate + ATP = (2R)-3-phospho-glyceroyl phosphate + ADP. The protein operates within carbohydrate degradation; glycolysis; pyruvate from D-glyceraldehyde 3-phosphate: step 2/5. The protein is Phosphoglycerate kinase of Lactobacillus delbrueckii subsp. bulgaricus (strain ATCC 11842 / DSM 20081 / BCRC 10696 / JCM 1002 / NBRC 13953 / NCIMB 11778 / NCTC 12712 / WDCM 00102 / Lb 14).